The following is a 327-amino-acid chain: Zinc transport protein ZntB (327 aa).

The Cytoplasmic segment spans residues 1–273; sequence MEAIKGSDVN…ARRTYTMSLM (273 aa). A helical transmembrane segment spans residues 274 to 294; the sequence is AMVFLPSTFLTGLFGVNLGGI. Topologically, residues 295–300 are periplasmic; sequence PGGGWR. The chain crosses the membrane as a helical span at residues 301 to 321; it reads FGFSLFCILLVVLIGGVTLWL. Residues 322 to 327 are Cytoplasmic-facing; it reads HRSKWL.

This sequence belongs to the CorA metal ion transporter (MIT) (TC 1.A.35) family.

It is found in the cell inner membrane. The catalysed reaction is Zn(2+)(out) + H(+)(out) = Zn(2+)(in) + H(+)(in). Functionally, zinc transporter. Acts as a Zn(2+):proton symporter, which likely mediates zinc ion uptake. This chain is Zinc transport protein ZntB, found in Salmonella agona (strain SL483).